The primary structure comprises 660 residues: MSAIESVMQEHRVFNPPESFVRQAAIPGMDAYRALCAEAERDYEGFWASRARDLLHWNKPFTKVLDESNAPFYKWFEDGELNASYNCLDRNLQNGNADKTAIVFEADDGTATRVSYRDLHAKVCRFANGLKALGIKKGDRVVIYMPMSVEGVVAMQACARLGATHSVVFGGFSAKSLQERLVDVGAVALITADEQMRGGKALPLKAIADDALALGGCEAVKNVIVYRRTGGKVNWVEGRDRWMEDVSAGQPDTCEAVPVSAEHPLFVLYTSGSTGKPKGVQHSTGGYLLWALMTMQWTFDIKPDDLFWCTADIGWVTGHTYIAYGPLAAGATQIIFEGVPTYPNAGRFWDMIARHKVSIFYTAPTAIRSLIKAAEADEKIHPKQYDLSSLRLLGTVGEPINPEAWMWYYKNIGNERCPIVDTFWQTETGGHMITPLPGATPLVPGSCTLPLPGIMAAIVDETGHDVPNGSGGILVVKRPWPAMIRTIWGDPERFKKSYFPEELGGKLYLAGDGSIRDKETGYFTIMGRIDDVLNVSGHRMGTMEIESALVANPIVAEAAVVGRPDDTTGEAICAFVVLKRARPSDAEAQQIATELRNWVAKEIGPIAKPKDIRFGDNLPKTRSGKIMRRLLRSLAKGEEITQDTSTLENPAILDQLKQAQ.

CoA is bound by residues 197 to 200 (RGGK) and T317. ATP-binding positions include 397-399 (GEP), 421-426 (DTFWQT), D512, and R528. A CoA-binding site is contributed by S536. Position 539 (R539) interacts with ATP. The Mg(2+) site is built by V550 and V555. The residue at position 625 (K625) is an N6-acetyllysine.

This sequence belongs to the ATP-dependent AMP-binding enzyme family. Mg(2+) is required as a cofactor. Post-translationally, acetylated. Deacetylation by the SIR2-homolog deacetylase activates the enzyme.

It carries out the reaction acetate + ATP + CoA = acetyl-CoA + AMP + diphosphate. In terms of biological role, catalyzes the conversion of acetate into acetyl-CoA (AcCoA), an essential intermediate at the junction of anabolic and catabolic pathways. AcsA undergoes a two-step reaction. In the first half reaction, AcsA combines acetate with ATP to form acetyl-adenylate (AcAMP) intermediate. In the second half reaction, it can then transfer the acetyl group from AcAMP to the sulfhydryl group of CoA, forming the product AcCoA. The protein is Acetyl-coenzyme A synthetase of Cupriavidus pinatubonensis (strain JMP 134 / LMG 1197) (Cupriavidus necator (strain JMP 134)).